The following is a 344-amino-acid chain: MPQSATKPFIDVLSGQRQAIPPMWMMRQAGRYLPEYREVRAKAGGFLDLCFNPELAAEVTLQPIRRFGFDAAIIFSDILVIPYALGRSVRFEVGEGPRLEPLDDPAKVATLAPRADFGKLAPVFDALKIVRGALDPKTALIGFCGAPWTVATYMVAGHGTPDQAPARMMAYRHPDAFAKIIDVLVDNSIEYLLAQLAAGANALQIFDTWAGVLPPAEFARWSVEPTRRIVEGVRAKVPDAKIIGFPRGAGAQLPGYVEATGVNGVSIDWTAEPAFIRERVQSRVAVQGNLDPLVLITGGAALDRAVDNVLANFAQGRFIFNLGHGIQPETPIAHVEQMLKRVRG.

Substrate is bound by residues Arg-27 to Arg-31, Phe-46, Asp-77, Tyr-153, Thr-208, and His-324.

This sequence belongs to the uroporphyrinogen decarboxylase family. In terms of assembly, homodimer.

Its subcellular location is the cytoplasm. It catalyses the reaction uroporphyrinogen III + 4 H(+) = coproporphyrinogen III + 4 CO2. The protein operates within porphyrin-containing compound metabolism; protoporphyrin-IX biosynthesis; coproporphyrinogen-III from 5-aminolevulinate: step 4/4. Functionally, catalyzes the decarboxylation of four acetate groups of uroporphyrinogen-III to yield coproporphyrinogen-III. This Bradyrhizobium diazoefficiens (strain JCM 10833 / BCRC 13528 / IAM 13628 / NBRC 14792 / USDA 110) protein is Uroporphyrinogen decarboxylase.